The chain runs to 190 residues: UPF0301 protein Rpic_0619 (190 aa).

Belongs to the UPF0301 (AlgH) family.

The polypeptide is UPF0301 protein Rpic_0619 (Ralstonia pickettii (strain 12J)).